Consider the following 358-residue polypeptide: Alpha-ketoglutarate-dependent L-arginine hydroxylase (358 aa).

The interval 1–21 (MTESPTTHHGAAPPDSVATPV) is disordered. A helical membrane pass occupies residues 117 to 135 (LSFLLMLYAGLLGDVFGWA). Residue 156-158 (LVS) participates in L-arginine binding. Fe cation-binding residues include histidine 168 and glutamate 170. Threonine 194 serves as a coordination point for 2-oxoglutarate. An L-arginine-binding site is contributed by 268–270 (DGD). Histidine 316 is a Fe cation binding site. The 2-oxoglutarate site is built by arginine 330 and arginine 334. Arginine 334 lines the L-arginine pocket.

This sequence belongs to the clavaminate synthase family. It depends on Fe cation as a cofactor.

It is found in the membrane. It carries out the reaction L-arginine + 2-oxoglutarate + O2 = (2S,3S)-hydroxyarginine + succinate + CO2. It participates in antibiotic biosynthesis. Involved in the biosynthesis of capreomycidine, an unusual amino acid used by non-ribosomal peptide synthases (NRPS) to make the tuberactinomycin class of peptide antibiotics such as viomycin and capreomycin. Catalyzes the stereospecific hydroxylation of the C3 of (2S)-arginine to generate (3S)-hydroxy-(2S)-arginine. Usually clavaminic acid synthase-like oxygenases catalyze the formation of threo diastereomers, however VioC produces the erythro diastereomer of beta-carbon-hydroxylated L-arginine. It exerts a broad substrate specificity by accepting the analogs L-homoarginine and L-canavanine for the beta-carbon hydroxylation. The chain is Alpha-ketoglutarate-dependent L-arginine hydroxylase (vioC) from Streptomyces vinaceus.